Reading from the N-terminus, the 107-residue chain is UPF0145 protein YbjQ (107 aa).

The protein belongs to the UPF0145 family.

This Escherichia coli O139:H28 (strain E24377A / ETEC) protein is UPF0145 protein YbjQ.